Reading from the N-terminus, the 322-residue chain is Probable heme-iron transport system permease protein IsdF (322 aa).

Helical transmembrane passes span Leu-9–Gly-29, Ile-61–Ala-81, Ala-89–Ile-109, Phe-114–Leu-134, Val-143–Leu-163, Ile-179–Leu-199, Val-233–Val-253, Val-267–Gly-287, and Leu-294–Ile-314.

This sequence belongs to the binding-protein-dependent transport system permease family. FecCD subfamily.

It localises to the cell membrane. Part of the binding-protein-dependent transport system for heme-iron. Responsible for the translocation of the substrate across the membrane. In Staphylococcus aureus (strain bovine RF122 / ET3-1), this protein is Probable heme-iron transport system permease protein IsdF (isdF).